The following is a 138-amino-acid chain: Basic phospholipase A2 homolog Vur-S49 (138 aa).

An N-terminal signal peptide occupies residues 1–16 (MRALWIVAVCLIGVEG). Disulfide bonds link Cys42–Cys131, Cys44–Cys60, Cys59–Cys111, Cys65–Cys138, Cys66–Cys104, Cys73–Cys97, and Cys91–Cys102. The segment at 121-133 (KKYKVYLRFKCKG) is important for membrane-damaging activities in eukaryotes and bacteria; heparin-binding.

Belongs to the phospholipase A2 family. Group II subfamily. S49 sub-subfamily. As to expression, expressed by the venom gland.

It is found in the secreted. Snake venom phospholipase A2 homolog that lacks enzymatic activity. Is able to suppress the acetylcholine (ACh)-evoked current mediated by alpha-7 (CHRNA7)-similar nAChRs in L.stagnalis neurons (IC(50)=2.18 uM). This activity is only partially reversible and seems to be non-competitive. The sequence is that of Basic phospholipase A2 homolog Vur-S49 from Vipera renardi (Steppe viper).